A 231-amino-acid chain; its full sequence is Lipoprotein-releasing system ATP-binding protein LolD 2 (231 aa).

Residues 6-230 (VEARSLSKSF…DGRLVGQDPA (225 aa)) enclose the ABC transporter domain. 42-49 (GPSGSGKS) contacts ATP.

This sequence belongs to the ABC transporter superfamily. Lipoprotein translocase (TC 3.A.1.125) family. As to quaternary structure, the complex is composed of two ATP-binding proteins (LolD) and two transmembrane proteins (LolC and LolE).

It localises to the cell inner membrane. In terms of biological role, part of the ABC transporter complex LolCDE involved in the translocation of mature outer membrane-directed lipoproteins, from the inner membrane to the periplasmic chaperone, LolA. Responsible for the formation of the LolA-lipoprotein complex in an ATP-dependent manner. The sequence is that of Lipoprotein-releasing system ATP-binding protein LolD 2 from Rhodospirillum rubrum (strain ATCC 11170 / ATH 1.1.1 / DSM 467 / LMG 4362 / NCIMB 8255 / S1).